The following is an 807-amino-acid chain: Leucine-rich repeat-containing protein 41 (807 aa).

Residues 45–54 (ALFELCGRAV) are interaction with Elongin BC complex. A phosphoserine mark is found at Ser-155, Ser-276, and Ser-326. Disordered stretches follow at residues 269–290 (ASRG…RRPR), 304–335 (TRRK…AIGG), and 349–403 (ASGT…GSGA). Thr-327 carries the phosphothreonine modification. Residues 352–381 (TKQPSAPAAASASSSTSSKRAPASSASQPK) are compositionally biased toward low complexity. Ser-368 is subject to Phosphoserine. The span at 382–396 (PLKRFKRAAGKKGPR) shows a compositional bias: basic residues. LRR repeat units lie at residues 482-502 (WVSL…IFRL), 513-525 (AGCR…LSDL), 526-550 (FSPL…VLSI), 608-632 (SGSL…LVLQ), 638-661 (NLSL…VLFL), 696-723 (NSTL…VFSE), and 726-747 (SSSL…LLEF).

Part of an E3 ubiquitin-protein ligase complex with Elongin BC (ELOB and ELOC), RBX1 and CUL5. Component of a probable ECS(LRRC41) complex which contains CUL5, RNF7/RBX2, Elongin BC and LRRC41. Interacts with CUL5, RNF7, ELOB and ELOC.

It functions in the pathway protein modification; protein ubiquitination. Probable substrate recognition component of an ECS (Elongin BC-CUL2/5-SOCS-box protein) E3 ubiquitin ligase complex which mediates the ubiquitination and subsequent proteasomal degradation of target proteins. The sequence is that of Leucine-rich repeat-containing protein 41 (Lrrc41) from Mus musculus (Mouse).